A 344-amino-acid polypeptide reads, in one-letter code: Dihydroorotase (344 aa).

Zn(2+) is bound by residues His-14 and His-16. Residues 16 to 18 (HLR) and Asn-42 contribute to the substrate site. Residues Lys-100, His-137, and His-175 each coordinate Zn(2+). Lys-100 bears the N6-carboxylysine mark. Residue His-137 coordinates substrate. Leu-220 serves as a coordination point for substrate. Asp-248 contacts Zn(2+). Residue Asp-248 is part of the active site. His-252 and Ala-264 together coordinate substrate.

Belongs to the metallo-dependent hydrolases superfamily. DHOase family. Class II DHOase subfamily. In terms of assembly, homodimer. The cofactor is Zn(2+).

It catalyses the reaction (S)-dihydroorotate + H2O = N-carbamoyl-L-aspartate + H(+). Its pathway is pyrimidine metabolism; UMP biosynthesis via de novo pathway; (S)-dihydroorotate from bicarbonate: step 3/3. Its function is as follows. Catalyzes the reversible cyclization of carbamoyl aspartate to dihydroorotate. The protein is Dihydroorotase of Cupriavidus pinatubonensis (strain JMP 134 / LMG 1197) (Cupriavidus necator (strain JMP 134)).